The sequence spans 113 residues: Ribonuclease P protein component (113 aa).

The protein belongs to the RnpA family. In terms of assembly, consists of a catalytic RNA component (M1 or rnpB) and a protein subunit.

The catalysed reaction is Endonucleolytic cleavage of RNA, removing 5'-extranucleotides from tRNA precursor.. Its function is as follows. RNaseP catalyzes the removal of the 5'-leader sequence from pre-tRNA to produce the mature 5'-terminus. It can also cleave other RNA substrates such as 4.5S RNA. The protein component plays an auxiliary but essential role in vivo by binding to the 5'-leader sequence and broadening the substrate specificity of the ribozyme. This chain is Ribonuclease P protein component, found in Clavibacter michiganensis subsp. michiganensis (strain NCPPB 382).